A 159-amino-acid polypeptide reads, in one-letter code: Ribosome maturation factor RimP (159 aa).

It belongs to the RimP family.

The protein localises to the cytoplasm. Its function is as follows. Required for maturation of 30S ribosomal subunits. The chain is Ribosome maturation factor RimP from Streptococcus pneumoniae serotype 2 (strain D39 / NCTC 7466).